The following is a 67-amino-acid chain: Bowman-Birk type proteinase inhibitor 1 (67 aa).

7 disulfide bridges follow: Cys-5-Cys-59, Cys-6-Cys-21, Cys-9-Cys-55, Cys-11-Cys-19, Cys-29-Cys-36, Cys-33-Cys-48, and Cys-38-Cys-46.

Belongs to the Bowman-Birk serine protease inhibitor family. In terms of assembly, monomer. Although dimerization may occur in solution. In terms of tissue distribution, seed.

Functionally, inhibits trypsin but not chymotrypsin. The inhibitor consists of 2 domains and has 2 sites of interaction with trypsin. The protein is Bowman-Birk type proteinase inhibitor 1 of Dioclea glabra.